Here is a 506-residue protein sequence, read N- to C-terminus: Histidine ammonia-lyase (506 aa).

Positions alanine 143–glycine 145 form a cross-link, 5-imidazolinone (Ala-Gly). Serine 144 carries the 2,3-didehydroalanine (Ser) modification.

The protein belongs to the PAL/histidase family. In terms of processing, contains an active site 4-methylidene-imidazol-5-one (MIO), which is formed autocatalytically by cyclization and dehydration of residues Ala-Ser-Gly.

It is found in the cytoplasm. It catalyses the reaction L-histidine = trans-urocanate + NH4(+). It functions in the pathway amino-acid degradation; L-histidine degradation into L-glutamate; N-formimidoyl-L-glutamate from L-histidine: step 1/3. In Salmonella choleraesuis (strain SC-B67), this protein is Histidine ammonia-lyase.